Here is a 59-residue protein sequence, read N- to C-terminus: Zinc finger protein HVO_2753 (59 aa).

4 short sequence motifs (c(P)XCG motif) span residues 12 to 16 (CVSCG), 29 to 33 (CPDCG), 39 to 43 (CSKCR), and 51 to 55 (CPDCG). Zn(2+) is bound by residues cysteine 29 and cysteine 32. Zn(2+)-binding residues include cysteine 51 and cysteine 54.

In terms of assembly, monomer in solution.

In terms of biological role, zinc-binding protein that binds only one zinc ion. Is required for swarming and biofilm formation. In Haloferax volcanii (strain ATCC 29605 / DSM 3757 / JCM 8879 / NBRC 14742 / NCIMB 2012 / VKM B-1768 / DS2) (Halobacterium volcanii), this protein is Zinc finger protein HVO_2753.